The following is a 448-amino-acid chain: Gluconate permease (448 aa).

12 helical membrane-spanning segments follow: residues 2–22 (PLIIVALGILALLFLIMGLKL), 23–43 (NTFISLLVVSFGVALALGMPF), 52–72 (AGIGGTLGHIALIFGLGAMLG), 106–126 (FIIGIALFFEVGLVLLIPIVF), 134–154 (ISILFLGIPMVAALSVTHGFL), 174–194 (VLLYGFIVAVPTVLIAGPLFT), 228–248 (FGISVFTAMLPIIIMSVATII), 269–289 (IGNASTAMIISLLVAVYTMGI), 302–322 (CSTAISQIGMMLLIIGGGGAF), 347–367 (IILAWLIAAILRISLGSATVA), 373–393 (GLVIPLLGHSDVNLALVVLAT), and 428–448 (LLETIISVAGLGFILLLSLVV).

The protein belongs to the GntP permease family.

Its subcellular location is the cell membrane. The protein operates within carbohydrate acid metabolism; D-gluconate degradation. This Bacillus subtilis (strain 168) protein is Gluconate permease (gntP).